The sequence spans 236 residues: Glycoprotein U23 (236 aa).

Positions 1–17 (MLFLSFLLVCLCEEVRM) are cleaved as a signal peptide. N-linked (GlcNAc...) asparagine; by host glycosylation is found at asparagine 67, asparagine 80, and asparagine 103. A helical membrane pass occupies residues 184 to 204 (LVIWIGGISFIGAFVILIVIL).

It localises to the membrane. This is Glycoprotein U23 (U23) from Human herpesvirus 6A (strain Uganda-1102) (HHV-6 variant A).